The sequence spans 399 residues: Protein DDI1 homolog 2 (399 aa).

Positions 1 to 81 constitute a Ubiquitin-like domain; that stretch reads MLLTVYCVRR…VILRQKENAD (81 aa). A disordered region spans residues 99–134; it reads IAVPGTSNPQQRQLPRTQAQHSSPGEMASSPQGLDN. Over residues 103-131 the composition is skewed to polar residues; the sequence is GTSNPQQRQLPRTQAQHSSPGEMASSPQG. Threonine 104 bears the Phosphothreonine mark. Phosphoserine is present on residues serine 121, serine 128, serine 150, and serine 194. The active site involves aspartate 252. Positions 376-395 match the Ubiquitin-binding motif; the sequence is EEIADQELAEAIQKSAEDAE.

This sequence belongs to the DDI1 family. As to quaternary structure, homodimer.

The protein resides in the cytoplasm. It is found in the cytosol. The protein localises to the chromosome. Its function is as follows. Aspartic protease that mediates the cleavage of NFE2L1/NRF1 at 'Leu-104', thereby promoting release of NFE2L1/NRF1 from the endoplasmic reticulum membrane. Ubiquitination of NFE2L1/NRF1 is a prerequisite for cleavage, suggesting that DDI2 specifically recognizes and binds ubiquitinated NFE2L1/NRF1. Seems to act as a proteasomal shuttle which links the proteasome and replication fork proteins like RTF2. Required, with DDI1, for cellular survival following replication stress. Together or redudantly with DDI1, removes RTF2 from stalled forks to allow cell cycle progression after replication stress and maintains genome integrity. The chain is Protein DDI1 homolog 2 from Mus musculus (Mouse).